The primary structure comprises 438 residues: (3,5-dihydroxyphenyl)acetyl-CoA 1,2-dioxygenase (438 aa).

Substrate contacts are provided by residues aspartate 183, glutamate 189, 222 to 225 (HPRY), 233 to 238 (AGINLK), glycine 296, 325 to 327 (IPG), and glutamine 416.

The protein belongs to the enoyl-CoA hydratase/isomerase family. In terms of assembly, homohexamer; dimer of trimers.

It catalyses the reaction (3,5-dihydroxyphenyl)acetyl-CoA + O2 = 2-(3,5-dihydroxyphenyl)-2-oxoacetate + CoA + H(+). With respect to regulation, inhibited by DPA-S-(N-acetylcysteamine). Involved in the biosynthesis of the nonproteinogenic amino acid monomer (S)-3,5-dihydroxyphenylglycine (Dpg) responsible of the production of vancomycin and teicoplanin antibiotics. Catalyzes the unusual conversion 3,5-dihydroxyphenylacetyl-CoA (DPA-CoA) to 3,5-dihydroxyphenylglyoxylate. DpgC performed a net four-electron oxidation of the benzylic carbon of DPA-CoA and the hydrolysis of the thioester bond to generate free CoA. DpgC has the ability to process a diverse range of substituted phenylacetyl-CoA substrates. This Streptomyces toyocaensis protein is (3,5-dihydroxyphenyl)acetyl-CoA 1,2-dioxygenase.